We begin with the raw amino-acid sequence, 162 residues long: 2-C-methyl-D-erythritol 2,4-cyclodiphosphate synthase (162 aa).

Residues Asp9 and His11 each contribute to the a divalent metal cation site. 4-CDP-2-C-methyl-D-erythritol 2-phosphate contacts are provided by residues 9-11 and 35-36; these read DVH and HS. Residue His43 participates in a divalent metal cation binding. 4-CDP-2-C-methyl-D-erythritol 2-phosphate-binding positions include 57-59, 62-66, 133-136, Phe140, and Arg143; these read DIG, FPDTD, and TTTE.

This sequence belongs to the IspF family. As to quaternary structure, homotrimer. Requires a divalent metal cation as cofactor.

The catalysed reaction is 4-CDP-2-C-methyl-D-erythritol 2-phosphate = 2-C-methyl-D-erythritol 2,4-cyclic diphosphate + CMP. It participates in isoprenoid biosynthesis; isopentenyl diphosphate biosynthesis via DXP pathway; isopentenyl diphosphate from 1-deoxy-D-xylulose 5-phosphate: step 4/6. Involved in the biosynthesis of isopentenyl diphosphate (IPP) and dimethylallyl diphosphate (DMAPP), two major building blocks of isoprenoid compounds. Catalyzes the conversion of 4-diphosphocytidyl-2-C-methyl-D-erythritol 2-phosphate (CDP-ME2P) to 2-C-methyl-D-erythritol 2,4-cyclodiphosphate (ME-CPP) with a corresponding release of cytidine 5-monophosphate (CMP). The polypeptide is 2-C-methyl-D-erythritol 2,4-cyclodiphosphate synthase (Histophilus somni (strain 129Pt) (Haemophilus somnus)).